Consider the following 334-residue polypeptide: Porphobilinogen deaminase (334 aa).

Position 250 is an S-(dipyrrolylmethanemethyl)cysteine (Cys250).

It belongs to the HMBS family. In terms of assembly, monomer. Dipyrromethane is required as a cofactor.

The enzyme catalyses 4 porphobilinogen + H2O = hydroxymethylbilane + 4 NH4(+). It participates in porphyrin-containing compound metabolism; protoporphyrin-IX biosynthesis; coproporphyrinogen-III from 5-aminolevulinate: step 2/4. Its function is as follows. Tetrapolymerization of the monopyrrole PBG into the hydroxymethylbilane pre-uroporphyrinogen in several discrete steps. This is Porphobilinogen deaminase from Cutibacterium acnes (strain DSM 16379 / KPA171202) (Propionibacterium acnes).